The primary structure comprises 572 residues: Proline--tRNA ligase (572 aa).

Belongs to the class-II aminoacyl-tRNA synthetase family. ProS type 1 subfamily. In terms of assembly, homodimer.

The protein localises to the cytoplasm. It catalyses the reaction tRNA(Pro) + L-proline + ATP = L-prolyl-tRNA(Pro) + AMP + diphosphate. Catalyzes the attachment of proline to tRNA(Pro) in a two-step reaction: proline is first activated by ATP to form Pro-AMP and then transferred to the acceptor end of tRNA(Pro). As ProRS can inadvertently accommodate and process non-cognate amino acids such as alanine and cysteine, to avoid such errors it has two additional distinct editing activities against alanine. One activity is designated as 'pretransfer' editing and involves the tRNA(Pro)-independent hydrolysis of activated Ala-AMP. The other activity is designated 'posttransfer' editing and involves deacylation of mischarged Ala-tRNA(Pro). The misacylated Cys-tRNA(Pro) is not edited by ProRS. The sequence is that of Proline--tRNA ligase from Shigella dysenteriae serotype 1 (strain Sd197).